We begin with the raw amino-acid sequence, 72 residues long: ATP synthase subunit c (72 aa).

2 helical membrane-spanning segments follow: residues 5 to 25 and 51 to 71; these read LLAA…IGIA and AGLS…LLFV.

Belongs to the ATPase C chain family. F-type ATPases have 2 components, F(1) - the catalytic core - and F(0) - the membrane proton channel. F(1) has five subunits: alpha(3), beta(3), gamma(1), delta(1), epsilon(1). F(0) has three main subunits: a(1), b(2) and c(10-14). The alpha and beta chains form an alternating ring which encloses part of the gamma chain. F(1) is attached to F(0) by a central stalk formed by the gamma and epsilon chains, while a peripheral stalk is formed by the delta and b chains.

It is found in the cell membrane. In terms of biological role, f(1)F(0) ATP synthase produces ATP from ADP in the presence of a proton or sodium gradient. F-type ATPases consist of two structural domains, F(1) containing the extramembraneous catalytic core and F(0) containing the membrane proton channel, linked together by a central stalk and a peripheral stalk. During catalysis, ATP synthesis in the catalytic domain of F(1) is coupled via a rotary mechanism of the central stalk subunits to proton translocation. Its function is as follows. Key component of the F(0) channel; it plays a direct role in translocation across the membrane. A homomeric c-ring of between 10-14 subunits forms the central stalk rotor element with the F(1) delta and epsilon subunits. This Clostridium perfringens (strain ATCC 13124 / DSM 756 / JCM 1290 / NCIMB 6125 / NCTC 8237 / Type A) protein is ATP synthase subunit c.